The following is a 346-amino-acid chain: Guanine nucleotide-binding protein subunit beta-2 (346 aa).

WD repeat units lie at residues Gly-57–Val-96, Leu-99–Val-138, Gly-147–Asp-185, Gly-188–Met-227, Gly-230–Leu-269, Gln-274–Met-313, and Gly-316–Leu-346.

This sequence belongs to the WD repeat G protein beta family. As to quaternary structure, g proteins are composed of 3 units, alpha, beta and gamma. Interacts with Ggammae/Guanine nucleotide-binding protein subunit gamma-e.

Functionally, guanine nucleotide-binding proteins (G proteins) are involved as modulators or transducers in various transmembrane signaling systems. The beta and gamma chains are required for the GTPase activity, for replacement of GDP by GTP, and for G protein-effector interaction. This is Guanine nucleotide-binding protein subunit beta-2 from Calliphora vicina (Blue blowfly).